A 396-amino-acid polypeptide reads, in one-letter code: Elongation factor Tu (396 aa).

Residues 10–206 (KPHVNVGTIG…ALDDYIPEPE (197 aa)) form the tr-type G domain. The G1 stretch occupies residues 19–26 (GHVDHGKT). Position 19–26 (19–26 (GHVDHGKT)) interacts with GTP. Thr-26 contacts Mg(2+). The segment at 60–64 (GITIA) is G2. The segment at 81–84 (DCPG) is G3. GTP-binding positions include 81–85 (DCPGH) and 136–139 (NKAD). The tract at residues 136-139 (NKAD) is G4. The segment at 174–176 (SAL) is G5.

This sequence belongs to the TRAFAC class translation factor GTPase superfamily. Classic translation factor GTPase family. EF-Tu/EF-1A subfamily. Monomer.

The protein localises to the cytoplasm. The enzyme catalyses GTP + H2O = GDP + phosphate + H(+). Its function is as follows. GTP hydrolase that promotes the GTP-dependent binding of aminoacyl-tRNA to the A-site of ribosomes during protein biosynthesis. In Methylococcus capsulatus (strain ATCC 33009 / NCIMB 11132 / Bath), this protein is Elongation factor Tu.